The primary structure comprises 184 residues: Two-component response regulator ARR5 (184 aa).

A Response regulatory domain is found at 26–154 (HVLAVDDSMV…DVKRLRDSLM (129 aa)). At Asp-87 the chain carries 4-aspartylphosphate.

It belongs to the ARR family. Type-A subfamily. In terms of processing, two-component system major event consists of a His-to-Asp phosphorelay between a sensor histidine kinase (HK) and a response regulator (RR). In plants, the His-to-Asp phosphorelay involves an additional intermediate named Histidine-containing phosphotransfer protein (HPt). This multistep phosphorelay consists of a His-Asp-His-Asp sequential transfer of a phosphate group between first a His and an Asp of the HK protein, followed by the transfer to a conserved His of the HPt protein and finally the transfer to an Asp in the receiver domain of the RR protein. Predominantly expressed in roots and shoot apical meristems.

The protein resides in the nucleus. In terms of biological role, functions as a response regulator involved in His-to-Asp phosphorelay signal transduction system. Phosphorylation of the Asp residue in the receiver domain activates the ability of the protein to promote the transcription of target genes. Type-A response regulators seem to act as negative regulators of the cytokinin signaling. In Arabidopsis thaliana (Mouse-ear cress), this protein is Two-component response regulator ARR5 (ARR5).